A 391-amino-acid chain; its full sequence is uncharacterized protein (391 aa).

In terms of domain architecture, OBG-type G spans 85–314 (ATAAFVGFPS…LKEKIYEKLG (230 aa)). GTP is bound by residues 91–98 (GFPSVGKS), 137–141 (DAPGI), and 267–270 (NKID). The 76-residue stretch at 314-389 (GFIKIYLKPQ…EDGDILTIVI (76 aa)) folds into the TGS domain.

The protein belongs to the TRAFAC class OBG-HflX-like GTPase superfamily. OBG GTPase family.

This is an uncharacterized protein from Methanocaldococcus jannaschii (strain ATCC 43067 / DSM 2661 / JAL-1 / JCM 10045 / NBRC 100440) (Methanococcus jannaschii).